Reading from the N-terminus, the 393-residue chain is Putative competence-damage inducible protein (393 aa).

It belongs to the CinA family.

This is Putative competence-damage inducible protein from Streptococcus suis (strain 98HAH33).